The following is a 167-amino-acid chain: Ammonium/H(+) antiporter subunit AmhM (167 aa).

The 85-residue stretch at 79–163 folds into the RCK C-terminal domain; sequence IDRIKLIRKQ…IQKFEELCAC (85 aa).

As to quaternary structure, interacts with AmhT.

The protein resides in the cell membrane. Modulates the activity of the ammonium/proton antiporter AmhT. The protein is Ammonium/H(+) antiporter subunit AmhM (amhM) of Alkalihalophilus pseudofirmus (strain ATCC BAA-2126 / JCM 17055 / OF4) (Bacillus pseudofirmus).